Consider the following 423-residue polypeptide: Voltage-dependent calcium channel gamma-8 subunit (423 aa).

The next 4 membrane-spanning stretches (helical) occupy residues Val-19–Ile-39, Ser-127–Ala-147, Ile-157–Ile-177, and Phe-207–Ile-227. A phosphoserine mark is found at Ser-251 and Ser-254. The disordered stretch occupies residues Arg-271–Ile-304. Over residues Ser-276–Arg-287 the composition is skewed to low complexity. The helical transmembrane segment at Val-318 to Gly-338 threads the bilayer. 2 disordered regions span residues Gly-342–Thr-363 and Val-378–Val-423. Pro residues predominate over residues Pro-384 to Pro-399. Polar residues predominate over residues Ala-410–Val-423.

It belongs to the PMP-22/EMP/MP20 family. CACNG subfamily. Interacts with CACNA1C. Identified in a complex with the L-type calcium channel subunits CACNA1C, CACNA2D1 and either CACNB1 or CACNB2. Acts as an auxiliary subunit for AMPA-selective glutamate receptors (AMPARs). Found in a complex with GRIA1, GRIA2, GRIA3, GRIA4, CNIH2, CNIH3, CACNG2, CACNG3, CACNG4, CACNG5 and CACNG7. Interacts with CNIH2. Found in a complex with GRIA1, GRIA2, GRIA3, GRIA4, DLG4 and CNIH2. Palmitoylated. Probably palmitoylated by ZDHHC3 and ZDHHC7.

It localises to the cell membrane. The protein resides in the postsynaptic density membrane. Regulates the activity of L-type calcium channels that contain CACNA1C as pore-forming subunit. Regulates the trafficking and gating properties of AMPA-selective glutamate receptors (AMPARs). Promotes their targeting to the cell membrane and synapses and modulates their gating properties by slowing their rates of activation, deactivation and desensitization and by mediating their resensitization. Does not show subunit-specific AMPA receptor regulation and regulates all AMPAR subunits. Thought to stabilize the calcium channel in an inactivated (closed) state. The protein is Voltage-dependent calcium channel gamma-8 subunit of Mus musculus (Mouse).